The chain runs to 499 residues: Glycerol kinase (499 aa).

Thr-13 serves as a coordination point for ADP. 3 residues coordinate ATP: Thr-13, Thr-14, and Ser-15. Sn-glycerol 3-phosphate is bound at residue Thr-13. Arg-17 provides a ligand contact to ADP. Positions 83, 84, 135, and 244 each coordinate sn-glycerol 3-phosphate. Residues Arg-83, Glu-84, Tyr-135, Asp-244, and Gln-245 each coordinate glycerol. ADP is bound by residues Thr-266 and Gly-309. ATP is bound by residues Thr-266, Gly-309, Gln-313, and Gly-410. Gly-410 and Asn-414 together coordinate ADP.

Belongs to the FGGY kinase family.

It carries out the reaction glycerol + ATP = sn-glycerol 3-phosphate + ADP + H(+). The protein operates within polyol metabolism; glycerol degradation via glycerol kinase pathway; sn-glycerol 3-phosphate from glycerol: step 1/1. With respect to regulation, inhibited by fructose 1,6-bisphosphate (FBP). In terms of biological role, key enzyme in the regulation of glycerol uptake and metabolism. Catalyzes the phosphorylation of glycerol to yield sn-glycerol 3-phosphate. The protein is Glycerol kinase of Paraburkholderia phymatum (strain DSM 17167 / CIP 108236 / LMG 21445 / STM815) (Burkholderia phymatum).